The sequence spans 385 residues: MKFPNLLSLGVAASTTVLAAVPNQKPIGDTIEDVHLGKFLIELGPGDTRWVTEEEKWGLRRDGRRFFDITAEAEQNVFPRTFAQTTVTFPTELQNLAHVKKLASSLSKNRLQTFLTKFTSFYTRYYKSESGRQSAIWLFEQIEKTIQESSATEARVEKFEHPWGQFSIIATIPGQTNKTVVVGAHQDSINLLMPSILAAPGADDDGSGTATILEALRVLLKSEAVAQGKAPNTVEFHWYSAEEAGLLGSQAVFAQYKQDNRDVKSMLQQDMTGYSKGTMNAGHADSVGIITDFVDEGLTNFIKKVVTGYCGISYVLTKCGYACSDHASASRYGYPSAFVIESKFEYSSKLIHTTRDEVSSLDFDHMLQHAKMTLGLVYELAFADL.

The signal sequence occupies residues 1-19; the sequence is MKFPNLLSLGVAASTTVLA. Positions 20–87 are excised as a propeptide; it reads AVPNQKPIGD…FPRTFAQTTV (68 aa). A glycan (N-linked (GlcNAc...) asparagine) is linked at Asn-177. The Zn(2+) site is built by His-185, Asp-204, Glu-243, and Asp-270. The cysteines at positions 319 and 323 are disulfide-linked. His-352 contributes to the Zn(2+) binding site.

The protein belongs to the peptidase M28 family. M28E subfamily. Monomer. Zn(2+) is required as a cofactor.

The protein localises to the secreted. Extracellular aminopeptidase that allows assimilation of proteinaceous substrates. This is Leucine aminopeptidase 1 (LAP1) from Ajellomyces capsulatus (strain H88) (Darling's disease fungus).